The following is a 368-amino-acid chain: tRNA-specific 2-thiouridylase MnmA (368 aa).

Residues 11–18 (GMSGGVDS) and M37 contribute to the ATP site. The interaction with target base in tRNA stretch occupies residues 97–99 (NPD). The active-site Nucleophile is C102. Residues C102 and C199 are joined by a disulfide bond. An ATP-binding site is contributed by G127. An interaction with tRNA region spans residues 149-151 (KDQ). C199 (cysteine persulfide intermediate) is an active-site residue. Residues 311–312 (RY) form an interaction with tRNA region.

It belongs to the MnmA/TRMU family. In terms of assembly, interacts with TusE.

The protein localises to the cytoplasm. The enzyme catalyses S-sulfanyl-L-cysteinyl-[protein] + uridine(34) in tRNA + AH2 + ATP = 2-thiouridine(34) in tRNA + L-cysteinyl-[protein] + A + AMP + diphosphate + H(+). Catalyzes the 2-thiolation of uridine at the wobble position (U34) of tRNA(Lys), tRNA(Glu) and tRNA(Gln), leading to the formation of s(2)U34, the first step of tRNA-mnm(5)s(2)U34 synthesis. Sulfur is provided by IscS, via a sulfur-relay system. Binds ATP and its substrate tRNAs. The sequence is that of tRNA-specific 2-thiouridylase MnmA from Klebsiella pneumoniae subsp. pneumoniae (strain ATCC 700721 / MGH 78578).